The chain runs to 594 residues: CRISPR-associated DNA-binding protein Cas12m (594 aa).

Residues 1-85 are recognition domain (REC1-N); the sequence is MSRLEARTRY…EKVRQVMVFE (85 aa). The segment at 86–153 is recognition domain (REC2); the sequence is SETTKKIKEL…ERSFIFEARK (68 aa). The interval 154-211 is recognition domain (REC1-C); the sequence is QELAQLEKERWAVVKELGKGSGLYWCNLEDVVNSYDIGRKKAKAAGGEMRFHRWDGTG. The segment at 212–314 is wedge domain (WED); the sequence is KVTVRFQKGL…RYKLNLVLEI (103 aa). Residues 315 to 329 are linker; the sequence is LGENTNRILPALEGT. Residues 330–540 are ruvC-I; it reads AAIDLGWRTV…KNHVEFTYVP (211 aa). A target nucleic-acid binding (TNB) region spans residues 541–575; it reads AENTTITCHKCGHKEKFDAAAQIIHTCSTCGELWD. C548, C551, C567, and C570 together coordinate Zn(2+). The segment at 576–594 is ruvC-II; that stretch reads QDYNAAKNLLAFSQKGGVK. D577 serves as a coordination point for Mg(2+).

It belongs to the CRISPR-associated DNA-binding protein Cas12m family. Mg(2+) serves as cofactor. Zn(2+) is required as a cofactor.

Functionally, CRISPR (clustered regularly interspaced short palindromic repeat), is an adaptive immune system that provides protection against mobile genetic elements (viruses, transposable elements and conjugative plasmids). CRISPR clusters contain sequences complementary to antecedent mobile elements and target invading nucleic acids. CRISPR clusters are transcribed and processed into CRISPR RNA (crRNA). Recognizes a short motif in the CRISPR repeat sequences (the 5' PAM or protospacer adjacent motif, 5'-C/TCN-3' in this organism) to help distinguish self versus nonself, as targets within the bacterial CRISPR locus do not have PAMs. Upon expression in E.coli as a CRISPR locus inhibits plasmid propagation when targeted to regions essential for plasmid propagation (replication origin but not a selectable marker), probably by inhibiting transcription. Cas12m-crRNA binds DNA in a PAM-dependent, crRNA-guided fashion. Upon expression in E.coli as a CRISPR region preferentially binds to its associated crRNA. Probably required for pre-crRNA processing to mature crRNA. This chain is CRISPR-associated DNA-binding protein Cas12m, found in Thermanaerosceptrum fracticalcis.